The following is a 1523-amino-acid chain: TALPID3 protein (1523 aa).

Positions 1 to 16 are enriched in polar residues; sequence MEAESGSSTSQDSLAS. 2 disordered regions span residues 1-20 and 57-84; these read MEAESGSSTSQDSLASLTAG and SRQAAGVALSRGETPCEPPVPSSGASNG. 2 coiled-coil regions span residues 428 to 466 and 499 to 528; these read IEKTVKKADDLLQVLGQLRKEMHDMLQEASSWKSDMNDL and ILSDAKRVLREVQSRKKVLEENLEAVLRAK. Residues 498 to 585 form a required for centrosomal localization region; the sequence is SILSDAKRVL…MEQVKYDQKV (88 aa). Disordered stretches follow at residues 1070–1112, 1137–1262, 1294–1313, 1373–1410, and 1498–1523; these read EPLV…LSGD, VITP…SEGE, ANEMDYDPPSEGQVVRRSHK, DIDHATARASEDRPYQGSRSPSPGQLTHPAEILGDADT, and SMNIDDQTQSLSSIHGDSDSSGADTF. The segment covering 1073–1088 has biased composition (pro residues); the sequence is VPTPLPTPQATPPQTP. Polar residues predominate over residues 1099 to 1108; it reads TPESSPSITE. Low complexity-rich tracts occupy residues 1137–1149 and 1236–1251; these read VITPISTPPEIIT and SSEQSTQESSLTPTET. The span at 1373–1386 shows a compositional bias: basic and acidic residues; that stretch reads DIDHATARASEDRP. The segment covering 1507–1523 has biased composition (low complexity); the sequence is SLSSIHGDSDSSGADTF.

This sequence belongs to the TALPID3 family. In terms of tissue distribution, ubiquitously expressed.

The protein localises to the cytoplasm. It localises to the cytoskeleton. Its subcellular location is the microtubule organizing center. The protein resides in the centrosome. Required for ciliogenesis and sonic hedgehog/SHH signaling. Independently, involved in regulation of cell intracellular organization. Involved in regulation of cell polarity. The chain is TALPID3 protein (TALPID3) from Gallus gallus (Chicken).